The following is a 398-amino-acid chain: Cap-specific mRNA (nucleoside-2'-O-)-methyltransferase 1 (398 aa).

Positions 85-298 constitute a RrmJ-type SAM-dependent 2'-O-MTase domain; it reads QFSNRAGHKL…ERYLVCVDFL (214 aa). Residues Gly-132 and Asp-211 each contribute to the S-adenosyl-L-methionine site. The active-site Proton acceptor is Lys-252. The disordered stretch occupies residues 371-398; sequence LKAKETTTRTSAESDDSPLSSRESCKDG.

It carries out the reaction a 5'-end (N(7)-methyl 5'-triphosphoguanosine)-ribonucleoside in mRNA + S-adenosyl-L-methionine = a 5'-end (N(7)-methyl 5'-triphosphoguanosine)-(2'-O-methyl-ribonucleoside) in mRNA + S-adenosyl-L-homocysteine + H(+). S-adenosyl-L-methionine-dependent methyltransferase that mediates RNA cap1 2'-O-ribose methylation to the 5'-cap structure of RNAs. Methylates the ribose of the first nucleotide of a m(7)GpppG-capped mRNA to produce m(7)GpppNmp (cap1). The polypeptide is Cap-specific mRNA (nucleoside-2'-O-)-methyltransferase 1 (Leishmania braziliensis).